A 122-amino-acid chain; its full sequence is WUSCHEL-related homeobox 7 (122 aa).

A DNA-binding region (homeobox; WUS-type) is located at residues Ala25–Cys89. The span at Asp98–Asp111 shows a compositional bias: basic and acidic residues. Residues Asp98 to Gly122 are disordered. Residues Asn112–Gly122 show a composition bias toward basic residues.

The protein belongs to the WUS homeobox family.

Its subcellular location is the nucleus. In terms of biological role, potential transcription factor that plays a central role during developmental processes. The sequence is that of WUSCHEL-related homeobox 7 (WOX7) from Arabidopsis thaliana (Mouse-ear cress).